The following is a 629-amino-acid chain: EF-hand calcium-binding domain-containing protein 7 (629 aa).

The interval 1-25 (MAISPRSDATFSSQKSTPSESPRTK) is disordered. Residues 7–21 (SDATFSSQKSTPSES) are compositionally biased toward polar residues. EF-hand domains are found at residues 102-137 (TSKA…RGEK) and 138-173 (MTRE…TNEQ). Positions 195-229 (NHIEGSPERDPSPVPKPSPKITRKTDPETFLNKGD) are disordered. Phosphoserine occurs at positions 200 and 212. Positions 403–438 (EFKSTLSDIFEVIDLDGNGLLSLEEYNFFELRTSGE) constitute an EF-hand 3 domain. Ca(2+) contacts are provided by Asp416, Asp418, Asn420, and Glu427.

Component of the EvC complex composed of EFCAB7, IQCE, EVC2 and EVC; built from two subcomplexes, EVC2:EVC and EFCAB7:IQCE. Interacts (via EF-hand 1 and 2) with IQCE (via N-terminus); this interaction anchors the EVC-EVC2 complex in a signaling microdomain at the base of cilia and stimulates the Hedgehog (Hh) pathway. Interacts with EVC2 (via N-terminal end). Interacts with EVC.

The protein localises to the cell projection. It localises to the cilium membrane. Its function is as follows. Component of the EvC complex that positively regulates ciliary Hedgehog (Hh) signaling. Required for the localization of the EVC2:EVC subcomplex at the base of primary cilia. In Homo sapiens (Human), this protein is EF-hand calcium-binding domain-containing protein 7 (EFCAB7).